A 699-amino-acid polypeptide reads, in one-letter code: Mannan-binding lectin serine protease 1 (699 aa).

Residues 1–19 form the signal peptide; that stretch reads MRWLLLYYALCFSLSKASA. In terms of domain architecture, CUB 1 spans 20–138; that stretch reads HTVELNNMFG…TGFDAHYMAV (119 aa). The homodimerization stretch occupies residues 20–184; it reads HTVELNNMFG…HTDNRTCRVE (165 aa). The interval 20–184 is interaction with MBL2; it reads HTVELNNMFG…HTDNRTCRVE (165 aa). The segment at 20–278 is interaction with FCN2; the sequence is HTVELNNMFG…STQSHSVLIL (259 aa). A glycan (N-linked (GlcNAc...) asparagine) is linked at asparagine 49. Residues glutamate 68, aspartate 76, aspartate 121, serine 123, aspartate 139, valine 140, and glutamate 142 each contribute to the Ca(2+) site. Cysteine 73 and cysteine 91 are disulfide-bonded. The EGF-like; calcium-binding domain maps to 139 to 182; the sequence is DVDECKEREDEELSCDHYCHNYIGGYYCSCRFGYILHTDNRTCR. 4 disulfides stabilise this stretch: cysteine 143-cysteine 157, cysteine 153-cysteine 166, cysteine 168-cysteine 181, and cysteine 185-cysteine 212. Ca(2+) is bound by residues asparagine 159, tyrosine 160, and glycine 163. Asparagine 159 is subject to (3R)-3-hydroxyasparagine. N-linked (GlcNAc...) (complex) asparagine glycosylation occurs at asparagine 178. The 113-residue stretch at 185–297 folds into the CUB 2 domain; that stretch reads CSDNLFTQRT…RGWRLSYRAA (113 aa). Ca(2+)-binding residues include glutamate 235, aspartate 245, aspartate 282, and serine 284. Cysteine 242 and cysteine 260 form a disulfide bridge. Sushi domains follow at residues 299–364 and 365–434; these read NECP…TCKI and VDCR…TCLP. 6 disulfides stabilise this stretch: cysteine 301–cysteine 349, cysteine 329–cysteine 362, cysteine 367–cysteine 414, cysteine 397–cysteine 432, cysteine 436–cysteine 572, and cysteine 475–cysteine 491. An N-linked (GlcNAc...) (complex) asparagine glycan is attached at asparagine 385. N-linked (GlcNAc...) asparagine glycosylation is present at asparagine 407. Positions 449 to 696 constitute a Peptidase S1 domain; the sequence is IFNGRPAQKG…NKDWIQRVTG (248 aa). The active-site Charge relay system is the histidine 490. An N-linked (GlcNAc) asparagine glycan is attached at leucine 533. Aspartate 552 functions as the Charge relay system in the catalytic mechanism. A glycan (N-linked (GlcNAc) asparagine) is linked at glutamate 599. Disulfide bonds link cysteine 614–cysteine 631 and cysteine 642–cysteine 672. Catalysis depends on serine 646, which acts as the Charge relay system.

Belongs to the peptidase S1 family. Homodimer. Interacts with the oligomeric lectins MBL2, FCN2 and FCN3; triggers the lectin pathway of complement through activation of C3. Interacts with SERPING1. Interacts with COLEC11; probably triggers the lectin pathway of complement. Post-translationally, the iron and 2-oxoglutarate dependent 3-hydroxylation of aspartate and asparagine is (R) stereospecific within EGF domains. N-glycosylated. Some N-linked glycan are of the complex-type. In terms of processing, autoproteolytic processing of the proenzyme produces the active enzyme composed on the heavy and the light chain held together by a disulfide bond. Isoform 1 but not isoform 2 is activated through autoproteolytic processing. In terms of tissue distribution, protein of the plasma which is primarily expressed by liver.

The protein localises to the secreted. Its activity is regulated as follows. Inhibited by SERPING1 and A2M. Functionally, functions in the lectin pathway of complement, which performs a key role in innate immunity by recognizing pathogens through patterns of sugar moieties and neutralizing them. The lectin pathway is triggered upon binding of mannan-binding lectin (MBL) and ficolins to sugar moieties which leads to activation of the associated proteases MASP1 and MASP2. Functions as an endopeptidase and may activate MASP2 or C2 or directly activate C3 the key component of complement reaction. Isoform 2 may have an inhibitory effect on the activation of the lectin pathway of complement or may cleave IGFBP5. Also plays a role in development. In Homo sapiens (Human), this protein is Mannan-binding lectin serine protease 1 (MASP1).